We begin with the raw amino-acid sequence, 490 residues long: Betaine aldehyde dehydrogenase (490 aa).

2 residues coordinate K(+): Ile27 and Asp93. 150–152 (GAW) serves as a coordination point for NAD(+). The active-site Charge relay system is the Lys162. Residue 176–179 (KPSE) coordinates NAD(+). Val180 serves as a coordination point for K(+). 230–233 (GTTT) provides a ligand contact to NAD(+). Leu246 contributes to the K(+) binding site. The active-site Proton acceptor is Glu252. The NAD(+) site is built by Gly254, Cys286, and Glu387. Cys286 acts as the Nucleophile in catalysis. The residue at position 286 (Cys286) is a Cysteine sulfenic acid (-SOH). Lys457 and Gly460 together coordinate K(+). The active-site Charge relay system is the Glu464.

This sequence belongs to the aldehyde dehydrogenase family. In terms of assembly, dimer of dimers. Requires K(+) as cofactor.

The catalysed reaction is betaine aldehyde + NAD(+) + H2O = glycine betaine + NADH + 2 H(+). It participates in amine and polyamine biosynthesis; betaine biosynthesis via choline pathway; betaine from betaine aldehyde: step 1/1. Its function is as follows. Involved in the biosynthesis of the osmoprotectant glycine betaine. Catalyzes the irreversible oxidation of betaine aldehyde to the corresponding acid. This chain is Betaine aldehyde dehydrogenase, found in Pseudomonas putida (strain GB-1).